We begin with the raw amino-acid sequence, 394 residues long: 3-hydroxybenzoate 6-hydroxylase 1 (394 aa).

The protein belongs to the 3-hydroxybenzoate 6-hydroxylase family. As to quaternary structure, homotrimer. FAD is required as a cofactor.

It catalyses the reaction 3-hydroxybenzoate + NADH + O2 + H(+) = 2,5-dihydroxybenzoate + NAD(+) + H2O. Inhibited by manganese, copper, mercury, and iron ions. Its function is as follows. Catalyzes the NAD- or NADP-dependent conversion of 3-hydroxybenzoate to gentisate. The affinity of the enzyme toward NAD is twice as high as for NADP. The enzyme shows higher specific activities against the intermediates in the degradation of 2,5-xylenol and 3,5-xylenol, 3-hydroxy-4-methylbenzoate and 3-hydroxy-5-methylbenzoate, respectively, than for 3-hydroxybenzoate. It also shows activity against 3-substituted benzoates. The protein is 3-hydroxybenzoate 6-hydroxylase 1 (xlnD) of Aquipseudomonas alcaligenes (Pseudomonas alcaligenes).